Reading from the N-terminus, the 315-residue chain is Eukaryotic translation initiation factor 2 subunit 1 (315 aa).

One can recognise an S1 motif domain in the interval 17–88 (EDVVMVNVRS…EKGYIDLSKR (72 aa)). S49 carries the post-translational modification Phosphoserine; by HRI. S52 is subject to Phosphoserine. Residue K141 is modified to N6-acetyllysine. At S158 the chain carries Phosphoserine. T279 and T281 each carry phosphothreonine. Residues 292 to 315 (RLERENAEVDGDDDAEEMEAKAED) form a disordered region. Positions 299-308 (EVDGDDDAEE) are enriched in acidic residues.

The protein belongs to the eIF-2-alpha family. In terms of assembly, eukaryotic translation initiation factor 2 eIF2 is a heterotrimeric complex composed of an alpha (EIF2S1), a beta (EIF2S2) and a gamma (EIF2S3) chain. eIF2 is member of the 43S pre-initiation complex (43S PIC). eIF2 forms a complex with at least CELF1/CUGBP1, CALR, CALR3, EIF2S1, EIF2S2, HSP90B1 and HSPA5. Interaction with METAP2 protects EIF2S1 from inhibitory phosphorylation. Interacts with ABCF1. Associates with ribosomes. Interacts with DDX3X in an RNA-independent manner. In terms of processing, phosphorylation at Ser-49 and Ser-52 stabilizes the eIF-2/GDP/eIF2B complex and prevents GDP/GTP exchange reaction, thus impairing the recycling of eIF-2 between successive rounds of initiation and leading to global inhibition of translation, while concomitantly initiating the preferential translation of integrated stress response (ISR)-specific mRNAs. Substrate for at least 4 kinases: EIF2AK1/HRI, EIF2AK2/PKR, EIF2AK3/PERK and EIF2AK4/GCN2. Phosphorylation at Ser-52 by the EIF2AK3/PERK protein kinase occurs in response to the unfolded protein response. Phosphorylation on Ser-52 by the EIF2AK4/GCN2 protein kinase occurs in response to amino acid starvation and UV irradiation. Phosphorylation at Ser-52 by EIF2AK1/HRI in response to mitochondrial damage promotes relocalization to the mitochondrial surface.

The protein localises to the cytoplasm. The protein resides in the stress granule. It localises to the cytosol. It is found in the mitochondrion. Activity is regulated by phosphorylation at Ser-49 and Ser-52, which stabilizes the eIF2/GDP/eIF2B complex and prevents the eIF2B-mediated exchange of GDP for GTP, thereby preventing the formation of the 43S pre-initiation complex (43S PIC). This results in the global attenuation of 5' cap-dependent protein synthesis and concomitant translation of ISR-specific mRNAs that contain a short upstream open reading frame (uORF) in their 5' UTR, such as ATF4, ATF5, DDIT3/CHOP and PPP1R15A/GADD34. Its function is as follows. Member of the eIF2 complex that functions in the early steps of protein synthesis by forming a ternary complex with GTP and initiator tRNA. This complex binds to a 40S ribosomal subunit, followed by mRNA binding to form a 43S pre-initiation complex. Junction of the 60S ribosomal subunit to form the 80S initiation complex is preceded by hydrolysis of the GTP bound to eIF2 and release of an eIF2-GDP binary complex. In order for eIF2 to recycle and catalyze another round of initiation, the GDP bound to eIF2 must exchange with GTP by way of a reaction catalyzed by eIF2B. EIF2S1/eIF2-alpha is a key component of the integrated stress response (ISR), required for adaptation to various stress: phosphorylation by metabolic-stress sensing protein kinases (EIF2AK1/HRI, EIF2AK2/PKR, EIF2AK3/PERK and EIF2AK4/GCN2) in response to stress converts EIF2S1/eIF2-alpha in a global protein synthesis inhibitor, leading to a attenuation of cap-dependent translation, while concomitantly initiating the preferential translation of ISR-specific mRNAs, such as the transcriptional activators ATF4 and QRICH1, and hence allowing ATF4- and QRICH1-mediated reprogramming. EIF2S1/eIF2-alpha also acts as an activator of mitophagy in response to mitochondrial damage: phosphorylation by EIF2AK1/HRI promotes relocalization to the mitochondrial surface, thereby triggering PRKN-independent mitophagy. This chain is Eukaryotic translation initiation factor 2 subunit 1 (EIF2S1), found in Sus scrofa (Pig).